The sequence spans 302 residues: tRNA-cytidine(32) 2-sulfurtransferase (302 aa).

The PP-loop motif signature appears at 44–49 (SGGKDS). Residues C119, C122, and C210 each coordinate [4Fe-4S] cluster.

Belongs to the TtcA family. As to quaternary structure, homodimer. It depends on Mg(2+) as a cofactor. The cofactor is [4Fe-4S] cluster.

The protein localises to the cytoplasm. The catalysed reaction is cytidine(32) in tRNA + S-sulfanyl-L-cysteinyl-[cysteine desulfurase] + AH2 + ATP = 2-thiocytidine(32) in tRNA + L-cysteinyl-[cysteine desulfurase] + A + AMP + diphosphate + H(+). It participates in tRNA modification. Catalyzes the ATP-dependent 2-thiolation of cytidine in position 32 of tRNA, to form 2-thiocytidine (s(2)C32). The sulfur atoms are provided by the cysteine/cysteine desulfurase (IscS) system. The sequence is that of tRNA-cytidine(32) 2-sulfurtransferase from Teredinibacter turnerae (strain ATCC 39867 / T7901).